Consider the following 162-residue polypeptide: Crossover junction endodeoxyribonuclease RuvC (162 aa).

Residues aspartate 8, glutamate 69, and histidine 141 contribute to the active site. 3 residues coordinate Mg(2+): aspartate 8, glutamate 69, and histidine 141.

The protein belongs to the RuvC family. Homodimer which binds Holliday junction (HJ) DNA. The HJ becomes 2-fold symmetrical on binding to RuvC with unstacked arms; it has a different conformation from HJ DNA in complex with RuvA. In the full resolvosome a probable DNA-RuvA(4)-RuvB(12)-RuvC(2) complex forms which resolves the HJ. The cofactor is Mg(2+).

It is found in the cytoplasm. The catalysed reaction is Endonucleolytic cleavage at a junction such as a reciprocal single-stranded crossover between two homologous DNA duplexes (Holliday junction).. In terms of biological role, the RuvA-RuvB-RuvC complex processes Holliday junction (HJ) DNA during genetic recombination and DNA repair. Endonuclease that resolves HJ intermediates. Cleaves cruciform DNA by making single-stranded nicks across the HJ at symmetrical positions within the homologous arms, yielding a 5'-phosphate and a 3'-hydroxyl group; requires a central core of homology in the junction. The consensus cleavage sequence is 5'-(A/T)TT(C/G)-3'. Cleavage occurs on the 3'-side of the TT dinucleotide at the point of strand exchange. HJ branch migration catalyzed by RuvA-RuvB allows RuvC to scan DNA until it finds its consensus sequence, where it cleaves and resolves the cruciform DNA. The protein is Crossover junction endodeoxyribonuclease RuvC of Wolbachia pipientis wMel.